A 214-amino-acid polypeptide reads, in one-letter code: MKLPPLMPAIFVKRLNRFVGKVFLNGKIERALIRNTGRLSELLKFGNTVFVREKEGGKYRYEIILARAEKSLVCVESHYANKIFEEYIRRNWKFKELKREVKLENERFDFLIDNTLVEVKSVNLVKNGVAMFPDAPTKRGTGHIRTLIKLSDKFKPLLVFVVQRSDFLSFEPNCETDPEFCKAYYEYVSKGFEVLVLKCRVSLEEINVVEVFFT.

It belongs to the SfsA family.

The chain is Sugar fermentation stimulation protein homolog from Aquifex aeolicus (strain VF5).